The chain runs to 363 residues: Chorismate synthase (363 aa).

The tract at residues 44–63 (DLDRRKPGTSRHTTQRQEPD) is disordered. 2 residues coordinate NADP(+): R48 and R54. FMN contacts are provided by residues 125 to 127 (RSS), 237 to 238 (NA), G277, 292 to 296 (KPTSS), and R318.

The protein belongs to the chorismate synthase family. In terms of assembly, homotetramer. FMNH2 serves as cofactor.

The catalysed reaction is 5-O-(1-carboxyvinyl)-3-phosphoshikimate = chorismate + phosphate. Its pathway is metabolic intermediate biosynthesis; chorismate biosynthesis; chorismate from D-erythrose 4-phosphate and phosphoenolpyruvate: step 7/7. Functionally, catalyzes the anti-1,4-elimination of the C-3 phosphate and the C-6 proR hydrogen from 5-enolpyruvylshikimate-3-phosphate (EPSP) to yield chorismate, which is the branch point compound that serves as the starting substrate for the three terminal pathways of aromatic amino acid biosynthesis. This reaction introduces a second double bond into the aromatic ring system. The protein is Chorismate synthase of Pseudomonas fluorescens (strain ATCC BAA-477 / NRRL B-23932 / Pf-5).